A 377-amino-acid polypeptide reads, in one-letter code: Nitric oxide reductase FlRd-NAD(+) reductase (377 aa).

Belongs to the FAD-dependent oxidoreductase family. FAD is required as a cofactor.

The protein localises to the cytoplasm. It catalyses the reaction 2 reduced [nitric oxide reductase rubredoxin domain] + NAD(+) + H(+) = 2 oxidized [nitric oxide reductase rubredoxin domain] + NADH. Its pathway is nitrogen metabolism; nitric oxide reduction. In terms of biological role, one of at least two accessory proteins for anaerobic nitric oxide (NO) reductase. Reduces the rubredoxin moiety of NO reductase. This Shigella boydii serotype 18 (strain CDC 3083-94 / BS512) protein is Nitric oxide reductase FlRd-NAD(+) reductase.